Reading from the N-terminus, the 575-residue chain is Cytochrome P450 monooxygenase opaB (575 aa).

A glycan (N-linked (GlcNAc...) asparagine) is linked at Asn-6. Residues 37–57 (FILAAILASIILLIIRNSMLS) form a helical membrane-spanning segment. N-linked (GlcNAc...) asparagine glycans are attached at residues Asn-83 and Asn-242. Residue Cys-521 participates in heme binding.

It belongs to the cytochrome P450 family. Heme serves as cofactor.

The protein localises to the membrane. It functions in the pathway secondary metabolite biosynthesis. In terms of biological role, cytochrome P450 monooxygenase; part of the gene cluster that mediates the biosynthesis of oxepinamides, derivatives of anthranilyl-containing tripeptides that share an oxepin ring and a fused pyrimidinone moiety. The nonribosomal peptide synthetase (NRPS) opaA assembles the quinazolinone core with D-Phe incorporation. The first adenylation domain (A1) of opaA loads and activates anthranilic acid whereas the second A domain (A2) is for activating of L-Phe, which is then converted to D-form by the E domain. The third A domain (A3) is responsible for L-Ile activation and the terminal condensation domain C3 for cyclization and releasing the NRPS product protuboxepin K. The cytochrome P450 monooxygenase opaB then catalyzes alone the oxepin ring formation to convert protuboxepin K into protuboxepin A. The flavoenzyme opaC installs subsequently one hydroxyl group at the oxepin ring, accompanied by double bond migration, to form 15-epi-oxepinamide E. The epimerase opaE changes the D-Phe residue back to L-form, leading to oxepinamide E, which is further methylated at the hydroxyl group at C-12 by the O-methyltransferase OpaF to yield oxepinamide F. The chain is Cytochrome P450 monooxygenase opaB from Aspergillus ustus.